A 281-amino-acid polypeptide reads, in one-letter code: Small ribosomal subunit protein uS2 (281 aa).

The segment at 225–281 (LMERKAEKPEEEETEEAAPRRERRARSGARRSRQNENEATAEAATEVAEAPEAEEAE) is disordered. The segment covering 245-256 (RERRARSGARRS) has biased composition (basic residues). Over residues 262–272 (EATAEAATEVA) the composition is skewed to low complexity.

The protein belongs to the universal ribosomal protein uS2 family.

The protein is Small ribosomal subunit protein uS2 of Porphyromonas gingivalis (strain ATCC 33277 / DSM 20709 / CIP 103683 / JCM 12257 / NCTC 11834 / 2561).